A 214-amino-acid polypeptide reads, in one-letter code: tRNA (guanine-N(7)-)-methyltransferase (214 aa).

Residues Glu-45, Glu-70, Asp-97, and Asp-119 each coordinate S-adenosyl-L-methionine. Residue Asp-119 is part of the active site. Residues Lys-123, Asp-155, and 192-195 (TEYE) each bind substrate.

Belongs to the class I-like SAM-binding methyltransferase superfamily. TrmB family.

The catalysed reaction is guanosine(46) in tRNA + S-adenosyl-L-methionine = N(7)-methylguanosine(46) in tRNA + S-adenosyl-L-homocysteine. Its pathway is tRNA modification; N(7)-methylguanine-tRNA biosynthesis. Catalyzes the formation of N(7)-methylguanine at position 46 (m7G46) in tRNA. The sequence is that of tRNA (guanine-N(7)-)-methyltransferase from Clostridioides difficile (strain 630) (Peptoclostridium difficile).